We begin with the raw amino-acid sequence, 412 residues long: Alpha-1-antitrypsin 1-3 (412 aa).

The N-terminal stretch at 1–24 is a signal peptide; that stretch reads MTPSISWGLLLLAGLCCLVPSFLA. 3 N-linked (GlcNAc...) asparagine glycosylation sites follow: Asn-64, Asn-101, and Asn-265. Positions 368-387 are RCL; that stretch reads AVTVLLAVPYSMPPILRFDH.

Belongs to the serpin family.

It localises to the secreted. In terms of biological role, inhibitor of serine proteases. Can inhibit trypsin and chymotrypsin; relatively ineffective against elastase. This is Alpha-1-antitrypsin 1-3 (Serpina1c) from Mus musculus (Mouse).